The primary structure comprises 386 residues: Succinate--CoA ligase [ADP-forming] subunit beta (386 aa).

An ATP-grasp domain is found at 9 to 244 (KAVLRSYGVS…LDEEDSKEIE (236 aa)). ATP is bound by residues lysine 46, 53–55 (GRG), glutamate 99, cysteine 102, and glutamate 107. Residues asparagine 199 and aspartate 213 each coordinate Mg(2+). Residues asparagine 264 and 321–323 (GIM) contribute to the substrate site.

The protein belongs to the succinate/malate CoA ligase beta subunit family. As to quaternary structure, heterotetramer of two alpha and two beta subunits. It depends on Mg(2+) as a cofactor.

It carries out the reaction succinate + ATP + CoA = succinyl-CoA + ADP + phosphate. The catalysed reaction is GTP + succinate + CoA = succinyl-CoA + GDP + phosphate. The protein operates within carbohydrate metabolism; tricarboxylic acid cycle; succinate from succinyl-CoA (ligase route): step 1/1. Succinyl-CoA synthetase functions in the citric acid cycle (TCA), coupling the hydrolysis of succinyl-CoA to the synthesis of either ATP or GTP and thus represents the only step of substrate-level phosphorylation in the TCA. The beta subunit provides nucleotide specificity of the enzyme and binds the substrate succinate, while the binding sites for coenzyme A and phosphate are found in the alpha subunit. The polypeptide is Succinate--CoA ligase [ADP-forming] subunit beta (Bacillus cereus (strain G9842)).